Reading from the N-terminus, the 100-residue chain is uncharacterized protein (100 aa).

In terms of domain architecture, HTH arsR-type spans Met-1–Ile-100. A DNA-binding region (H-T-H motif) is located at residues Val-44–Arg-67.

This is an uncharacterized protein from Bacillus subtilis (strain 168).